Consider the following 655-residue polypeptide: Serine/threonine-protein kinase SKM1 (655 aa).

The PH domain maps to 3 to 118 (GVKKEGWISY…WLDAIFAKCP (116 aa)). Residues 123–136 (VSSPTNFTHKVHVG) form the CRIB domain. Composition is skewed to basic and acidic residues over residues 265–276 (EEGRVHVSKEST) and 318–327 (KNHDSKTKWH). The tract at residues 265-327 (EEGRVHVSKE…KNHDSKTKWH (63 aa)) is disordered. The Protein kinase domain maps to 360-639 (FQLVEKAGQG…VRKLLTFEFL (280 aa)). Residues 366 to 374 (AGQGASGAV) and Lys406 contribute to the ATP site. Asp507 serves as the catalytic Proton acceptor.

This sequence belongs to the protein kinase superfamily. STE Ser/Thr protein kinase family. STE20 subfamily.

It catalyses the reaction L-seryl-[protein] + ATP = O-phospho-L-seryl-[protein] + ADP + H(+). It carries out the reaction L-threonyl-[protein] + ATP = O-phospho-L-threonyl-[protein] + ADP + H(+). In terms of biological role, may be involved in cellular signaling or cytoskeletal functions. May play a role in morphogenetic control. The sequence is that of Serine/threonine-protein kinase SKM1 (SKM1) from Saccharomyces cerevisiae (strain ATCC 204508 / S288c) (Baker's yeast).